The sequence spans 382 residues: MSTYTRPVMLLLCGLLLLTLAIAVLNTLVPLWLAQANLPTWQVGMVSSSYFTGNLVGTLFTGYLIKRIGFNRSYYLASLIFAAGCVGLGVMVGFWSWMSWRFIAGIGCAMIWVVVESALMCSGTSHNRGRLLAAYMMAYYMGTFLGQLLVSKVSGELLHVLPWVTGMILAGILPLLFTRIVNQQTQARHSSSISAMLKLRQARLGVNGCIISGIVLGSLYGLMPLYLKHQGMANASIGFWMAVLVSAGILGQWPMGRLADKFGRLLVLRVQVFVVILGSIAMLTQAAMAPALFILGAAGFTLYPVAMAWACEKVEHHQLVAMNQALLLSYTVGSLLGPSFAAMLMQNYSDNLLFIMIASVSFIYLLMLLRNAGQTPNPVAHI.

A run of 12 helical transmembrane segments spans residues 8–28 (VMLL…LNTL), 45–65 (MVSS…GYLI), 75–95 (YLAS…VGFW), 102–122 (FIAG…LMCS), 131–151 (LLAA…LLVS), 157–177 (LLHV…PLLF), 204–224 (LGVN…GLMP), 231–251 (GMAN…GILG), 270–290 (VQVF…AMAP), 291–311 (ALFI…AWAC), 325–345 (ALLL…AMLM), and 349–369 (SDNL…LMLL).

This sequence belongs to the major facilitator superfamily. YcaD (TC 2.A.1.26) family.

It is found in the cell inner membrane. This is an uncharacterized protein from Salmonella enteritidis PT4 (strain P125109).